The following is a 96-amino-acid chain: ATP-dependent Clp protease adapter protein ClpS (96 aa).

The protein belongs to the ClpS family. In terms of assembly, binds to the N-terminal domain of the chaperone ClpA.

Its function is as follows. Involved in the modulation of the specificity of the ClpAP-mediated ATP-dependent protein degradation. This is ATP-dependent Clp protease adapter protein ClpS from Streptomyces coelicolor (strain ATCC BAA-471 / A3(2) / M145).